The chain runs to 516 residues: MEVFILELVLGSKNITLEDLINVTRKGYKVSISEEAYEKIDKARALVDKYVEEGKVSYGITTGFGKFAEVSISKEQTGQLQKNIVMSHSCNVGNPLPIDIAKGIVLLRAVNLAKGYSGARRIVIEKLVELLNKDVTPWIPEKGSVGSSGDLSPLAHMSLVLIGLGKAYYKGELLEAKDALAKADIEPIPALSSKEGLALTNGTQALTSTGAHVLYDAINLSKHLDIAASLTMEGLHGIIDAYDPRIGEVRGHLGQINTAKNMRNILAGSKNVTKQGVERVQDSYVLRCIPQIHGASKDTLEYVKQKVELELNAVTDNPIIFVDTDEVISGGNFHGQPMALPFDFLGIALSEMANVSERRIEKMVNPAINNGLPAFLVEKGGLNSGFMIVQYSAASLVSENKVLAHPASVDSIPTSANQEDHVSMGSVAAKKSKDIFENVRKVIGMELITACQAIDLKEAKDKLSPATKVAYDEVRKIISYVSEDRPMYIDIHAAEDLIKTNKIVENVEKAIGKLEF.

Residues 147-149 (SSG) constitute a cross-link (5-imidazolinone (Ser-Gly)). S148 bears the 2,3-didehydroalanine (Ser) mark.

The protein belongs to the PAL/histidase family. Contains an active site 4-methylidene-imidazol-5-one (MIO), which is formed autocatalytically by cyclization and dehydration of residues Ser-Ser-Gly.

It is found in the cytoplasm. It catalyses the reaction L-histidine = trans-urocanate + NH4(+). The protein operates within amino-acid degradation; L-histidine degradation into L-glutamate; N-formimidoyl-L-glutamate from L-histidine: step 1/3. The sequence is that of Histidine ammonia-lyase 1 (hutH1) from Fusobacterium nucleatum subsp. nucleatum (strain ATCC 25586 / DSM 15643 / BCRC 10681 / CIP 101130 / JCM 8532 / KCTC 2640 / LMG 13131 / VPI 4355).